A 225-amino-acid chain; its full sequence is Urease accessory protein UreE (225 aa).

Composition is skewed to basic and acidic residues over residues 189–202 and 212–225; these read HSHDFMGHSHEHEG and NSHDNEHDEHHSRR. Positions 189-225 are disordered; that stretch reads HSHDFMGHSHEHEGHRHVHNHAGNSHDNEHDEHHSRR.

This sequence belongs to the UreE family.

The protein localises to the cytoplasm. In terms of biological role, involved in urease metallocenter assembly. Binds nickel. Probably functions as a nickel donor during metallocenter assembly. This chain is Urease accessory protein UreE, found in Edwardsiella ictaluri.